The sequence spans 456 residues: Keratin, type I cuticular Ha8 (456 aa).

Residues 1 to 104 are head; the sequence is MTSSYSSSSC…YGENTLNGHE (104 aa). The 312-residue stretch at 104–415 folds into the IF rod domain; that stretch reads EKETMQFLND…NLLESEDCKL (312 aa). The tract at residues 105-139 is coil 1A; sequence KETMQFLNDRLANYLEKVRQLEQENAELEATLLER. Residues 140–150 form a linker 1 region; the sequence is SKCHESTVCPD. The coil 1B stretch occupies residues 151 to 251; the sequence is YQSYFHTIEE…HEQEVKILRS (101 aa). The segment at 252–267 is linker 12; the sequence is QLGEKLRIELDIEPTI. The segment at 268-411 is coil 2; it reads DLNRVLGEMR…ATYRNLLESE (144 aa). The interval 412–456 is tail; sequence DCKLPCNPCSTSPSCVTAPCAPRPSCGPCTTCGPTCGASTTGSRF.

It belongs to the intermediate filament family.

This chain is Keratin, type I cuticular Ha8 (KRT38), found in Homo sapiens (Human).